We begin with the raw amino-acid sequence, 1082 residues long: Importin-4 (1082 aa).

Methionine 1 bears the N-acetylmethionine mark. The Importin N-terminal domain occupies 24–90 (ATEQLQTILR…KSLVLTALQK (67 aa)). HEAT repeat units follow at residues 348-385 (KLCPHVMPMLEEALRSEDPYQRKAGFLVLAVLSDGAGD), 390-427 (RLLYPLLQIVCKGLDDPSQIVRNAALFALGQFSENLQP), 431-471 (SYSE…NLGP), 475-513 (PYLPELMECMLQPLKNPSKARTKELAVSAIGAIATAAQD), 896-933 (QFVSRLFPVLLNNAREADPEVRSNAIFGLGVLAEHGGC), and 937-975 (DHFPKLLGLLLPLLARERHDRVRDNICGALARVLMASPV).

Belongs to the importin beta family. In terms of assembly, found in a cytosolic complex with ASF1 (ASF1A or ASF1B) and histones H3 and H4.

It localises to the cytoplasm. It is found in the nucleus. Functionally, nuclear transport receptor that mediates nuclear import of proteins, such as histones, RPS3A, TNP2 and VDR. Serves as receptor for nuclear localization signals (NLS) in cargo substrates. Is thought to mediate docking of the importin/substrate complex to the nuclear pore complex (NPC) through binding to nucleoporin and the complex is subsequently translocated through the pore by an energy requiring, Ran-dependent mechanism. At the nucleoplasmic side of the NPC, Ran binds to the importin, the importin/substrate complex dissociates and importin is re-exported from the nucleus to the cytoplasm where GTP hydrolysis releases Ran. The directionality of nuclear import is thought to be conferred by an asymmetric distribution of the GTP- and GDP-bound forms of Ran between the cytoplasm and nucleus. Mediates the nuclear import of the histone H3-H4 dimer when in complex with ASF1 (ASF1A or ASF1B). Mediates the ligand-independent nuclear import of vitamin D receptor (VDR). This Mus musculus (Mouse) protein is Importin-4 (Ipo4).